A 265-amino-acid polypeptide reads, in one-letter code: Putative cysteine-rich receptor-like protein kinase At4g11521 (265 aa).

The N-terminal stretch at 1-23 is a signal peptide; that stretch reads MMLNTLFLPIFLFFLITFDYVST. 2 Gnk2-homologous domains span residues 24-122 and 128-241; these read QTCF…NISF and MEPS…LYPF. N-linked (GlcNAc...) asparagine glycans are attached at residues N34, N102, and N119. The N-linked (GlcNAc...) asparagine glycan is linked to N247.

Belongs to the protein kinase superfamily. Ser/Thr protein kinase family. CRK subfamily.

Its subcellular location is the secreted. This is Putative cysteine-rich receptor-like protein kinase At4g11521 from Arabidopsis thaliana (Mouse-ear cress).